A 155-amino-acid chain; its full sequence is 6,7-dimethyl-8-ribityllumazine synthase (155 aa).

Residues F23, 57–59 (AFE), and 83–85 (AVI) contribute to the 5-amino-6-(D-ribitylamino)uracil site. Residue 88-89 (AT) coordinates (2S)-2-hydroxy-3-oxobutyl phosphate. H91 functions as the Proton donor in the catalytic mechanism. Residue F114 coordinates 5-amino-6-(D-ribitylamino)uracil. R128 serves as a coordination point for (2S)-2-hydroxy-3-oxobutyl phosphate.

Belongs to the DMRL synthase family.

The enzyme catalyses (2S)-2-hydroxy-3-oxobutyl phosphate + 5-amino-6-(D-ribitylamino)uracil = 6,7-dimethyl-8-(1-D-ribityl)lumazine + phosphate + 2 H2O + H(+). The protein operates within cofactor biosynthesis; riboflavin biosynthesis; riboflavin from 2-hydroxy-3-oxobutyl phosphate and 5-amino-6-(D-ribitylamino)uracil: step 1/2. Functionally, catalyzes the formation of 6,7-dimethyl-8-ribityllumazine by condensation of 5-amino-6-(D-ribitylamino)uracil with 3,4-dihydroxy-2-butanone 4-phosphate. This is the penultimate step in the biosynthesis of riboflavin. This is 6,7-dimethyl-8-ribityllumazine synthase from Leptospira biflexa serovar Patoc (strain Patoc 1 / Ames).